A 157-amino-acid polypeptide reads, in one-letter code: ATP synthase subunit b (157 aa).

A helical membrane pass occupies residues 7-27 (LIAQLVVFFILAWFTMKFVWP).

It belongs to the ATPase B chain family. As to quaternary structure, F-type ATPases have 2 components, F(1) - the catalytic core - and F(0) - the membrane proton channel. F(1) has five subunits: alpha(3), beta(3), gamma(1), delta(1), epsilon(1). F(0) has three main subunits: a(1), b(2) and c(10-14). The alpha and beta chains form an alternating ring which encloses part of the gamma chain. F(1) is attached to F(0) by a central stalk formed by the gamma and epsilon chains, while a peripheral stalk is formed by the delta and b chains.

It is found in the cell inner membrane. Functionally, f(1)F(0) ATP synthase produces ATP from ADP in the presence of a proton or sodium gradient. F-type ATPases consist of two structural domains, F(1) containing the extramembraneous catalytic core and F(0) containing the membrane proton channel, linked together by a central stalk and a peripheral stalk. During catalysis, ATP synthesis in the catalytic domain of F(1) is coupled via a rotary mechanism of the central stalk subunits to proton translocation. In terms of biological role, component of the F(0) channel, it forms part of the peripheral stalk, linking F(1) to F(0). The chain is ATP synthase subunit b from Azoarcus sp. (strain BH72).